The chain runs to 277 residues: Putative pyruvate, phosphate dikinase regulatory protein (277 aa).

Residue 151 to 158 coordinates ADP; it reads GISRTSKT.

It belongs to the pyruvate, phosphate/water dikinase regulatory protein family. PDRP subfamily.

The enzyme catalyses N(tele)-phospho-L-histidyl/L-threonyl-[pyruvate, phosphate dikinase] + ADP = N(tele)-phospho-L-histidyl/O-phospho-L-threonyl-[pyruvate, phosphate dikinase] + AMP + H(+). It carries out the reaction N(tele)-phospho-L-histidyl/O-phospho-L-threonyl-[pyruvate, phosphate dikinase] + phosphate + H(+) = N(tele)-phospho-L-histidyl/L-threonyl-[pyruvate, phosphate dikinase] + diphosphate. In terms of biological role, bifunctional serine/threonine kinase and phosphorylase involved in the regulation of the pyruvate, phosphate dikinase (PPDK) by catalyzing its phosphorylation/dephosphorylation. This chain is Putative pyruvate, phosphate dikinase regulatory protein, found in Alkaliphilus oremlandii (strain OhILAs) (Clostridium oremlandii (strain OhILAs)).